The following is a 34-amino-acid chain: Delta-conotoxin AtVIA (34 aa).

The propeptide occupies 1–4 (LSKK). The residue at position 5 (Gln-5) is a Pyrrolidone carboxylic acid. 3 cysteine pairs are disulfide-bonded: Cys-6–Cys-23, Cys-13–Cys-27, and Cys-22–Cys-31.

As to expression, expressed by the venom duct.

The protein localises to the secreted. Probable toxin from a worm-hunter cone snail. Shows an excitatory activity on a majority of mouse lumbar dorsal root ganglion (DRG) neurons. Very probably inhibits the inactivation of voltage-gated sodium channels (Nav). This is Delta-conotoxin AtVIA from Conus ateralbus (Cone snail).